Here is a 488-residue protein sequence, read N- to C-terminus: 3-octaprenyl-4-hydroxybenzoate carboxy-lyase (488 aa).

N172 contacts Mn(2+). Prenylated FMN is bound by residues I175–R177, R189–L191, and R194–G195. E238 serves as a coordination point for Mn(2+). D287 (proton donor) is an active-site residue.

Belongs to the UbiD family. Homohexamer. It depends on prenylated FMN as a cofactor. Mn(2+) serves as cofactor.

It is found in the cell membrane. The catalysed reaction is a 4-hydroxy-3-(all-trans-polyprenyl)benzoate + H(+) = a 2-(all-trans-polyprenyl)phenol + CO2. The protein operates within cofactor biosynthesis; ubiquinone biosynthesis. In terms of biological role, catalyzes the decarboxylation of 3-octaprenyl-4-hydroxy benzoate to 2-octaprenylphenol, an intermediate step in ubiquinone biosynthesis. The protein is 3-octaprenyl-4-hydroxybenzoate carboxy-lyase of Shewanella oneidensis (strain ATCC 700550 / JCM 31522 / CIP 106686 / LMG 19005 / NCIMB 14063 / MR-1).